Here is a 388-residue protein sequence, read N- to C-terminus: GTPase Obg (388 aa).

An Obg domain is found at 1 to 159 (MKFVDEAVIR…RSLKLELLLL (159 aa)). The region spanning 160–333 (ADVGLLGMPN…LAAKLWDFIQ (174 aa)) is the OBG-type G domain. GTP contacts are provided by residues 166 to 173 (GMPNAGKS), 191 to 195 (FTTLV), 213 to 216 (DIPG), 283 to 286 (NKAD), and 314 to 316 (SAY). Positions 173 and 193 each coordinate Mg(2+).

It belongs to the TRAFAC class OBG-HflX-like GTPase superfamily. OBG GTPase family. In terms of assembly, monomer. Requires Mg(2+) as cofactor.

It localises to the cytoplasm. Its function is as follows. An essential GTPase which binds GTP, GDP and possibly (p)ppGpp with moderate affinity, with high nucleotide exchange rates and a fairly low GTP hydrolysis rate. Plays a role in control of the cell cycle, stress response, ribosome biogenesis and in those bacteria that undergo differentiation, in morphogenesis control. This is GTPase Obg from Shewanella oneidensis (strain ATCC 700550 / JCM 31522 / CIP 106686 / LMG 19005 / NCIMB 14063 / MR-1).